Here is a 509-residue protein sequence, read N- to C-terminus: Fumarate hydratase, mitochondrial (509 aa).

The transit peptide at 1–43 directs the protein to the mitochondrion; sequence MYRSARSLHRFSASLSDLRAAQRSIKARNVCPAPGLRHQTVRM. Residues 144 to 146, 175 to 178, 185 to 187, and T233 contribute to the substrate site; these read SGT, HPND, and SSN. H234 serves as the catalytic Proton donor/acceptor. Residue S364 is part of the active site. Substrate-binding positions include S365 and 370-372; that span reads KVN.

This sequence belongs to the class-II fumarase/aspartase family. Fumarase subfamily. In terms of assembly, homotetramer.

Its subcellular location is the mitochondrion. The protein resides in the cytoplasm. The protein localises to the cytosol. It is found in the nucleus. It localises to the chromosome. The catalysed reaction is (S)-malate = fumarate + H2O. It participates in carbohydrate metabolism; tricarboxylic acid cycle; (S)-malate from fumarate: step 1/1. Functionally, catalyzes the reversible stereospecific interconversion of fumarate to L-malate. Experiments in other species have demonstrated that specific isoforms of this protein act in defined pathways and favor one direction over the other. Its function is as follows. Catalyzes the hydration of fumarate to L-malate in the tricarboxylic acid (TCA) cycle to facilitate a transition step in the production of energy in the form of NADH. In terms of biological role, catalyzes the dehydration of L-malate to fumarate. Fumarate metabolism in the cytosol plays a role during urea cycle and arginine metabolism; fumarate being a by-product of the urea cycle and amino-acid catabolism. Also plays a role in DNA repair by promoting non-homologous end-joining (NHEJ). In response to DNA damage translocates to the nucleus and accumulates at DNA double-strand breaks (DSBs): acts by catalyzing formation of fumarate. In Danio rerio (Zebrafish), this protein is Fumarate hydratase, mitochondrial.